Here is a 262-residue protein sequence, read N- to C-terminus: Adenosylcobinamide-GDP ribazoletransferase (262 aa).

Helical transmembrane passes span 43–63 (YFGL…WLTQ), 66–86 (LPAG…TGGF), 120–140 (GAIA…ELAL), 146–166 (AGSA…SIIF), 191–211 (LFIL…LAAL), and 242–262 (AAQQ…GSIL).

The protein belongs to the CobS family. It depends on Mg(2+) as a cofactor.

It is found in the cell inner membrane. The enzyme catalyses alpha-ribazole + adenosylcob(III)inamide-GDP = adenosylcob(III)alamin + GMP + H(+). It catalyses the reaction alpha-ribazole 5'-phosphate + adenosylcob(III)inamide-GDP = adenosylcob(III)alamin 5'-phosphate + GMP + H(+). Its pathway is cofactor biosynthesis; adenosylcobalamin biosynthesis; adenosylcobalamin from cob(II)yrinate a,c-diamide: step 7/7. In terms of biological role, joins adenosylcobinamide-GDP and alpha-ribazole to generate adenosylcobalamin (Ado-cobalamin). Also synthesizes adenosylcobalamin 5'-phosphate from adenosylcobinamide-GDP and alpha-ribazole 5'-phosphate. The sequence is that of Adenosylcobinamide-GDP ribazoletransferase from Shewanella putrefaciens (strain CN-32 / ATCC BAA-453).